The sequence spans 142 residues: Galactose-6-phosphate isomerase subunit LacA (142 aa).

This sequence belongs to the LacAB/RpiB family. As to quaternary structure, heteromultimeric protein consisting of LacA and LacB.

The catalysed reaction is aldehydo-D-galactose 6-phosphate = keto-D-tagatose 6-phosphate. It functions in the pathway carbohydrate metabolism; D-galactose 6-phosphate degradation; D-tagatose 6-phosphate from D-galactose 6-phosphate: step 1/1. The protein is Galactose-6-phosphate isomerase subunit LacA of Staphylococcus haemolyticus (strain JCSC1435).